The chain runs to 49 residues: Large ribosomal subunit protein bL33A (49 aa).

Belongs to the bacterial ribosomal protein bL33 family.

The chain is Large ribosomal subunit protein bL33A from Geobacillus kaustophilus (strain HTA426).